The primary structure comprises 283 residues: Cell differentiation protein rcd1 (283 aa).

The protein belongs to the CNOT9 family.

In terms of biological role, a differentiation-controlling factor that is essential for the onset of sexual development. Induces ste11 when sexual development is invoked through nitrogen starvation. The protein is Cell differentiation protein rcd1 (rcd1) of Schizosaccharomyces pombe (strain 972 / ATCC 24843) (Fission yeast).